A 247-amino-acid polypeptide reads, in one-letter code: MAAELEPLMAEWLGAEKAEDTRGQAASLNTMEDLLETVKKLQKEGSLEPQIEDLIHRINELQQGPAKKRSSEELGEAQALQEAMHRELDSLNEERVHLEEVLRKKQEAVSILKKHPQERDSDTPHLDAQQLEERLADLARQHKDLWEFHVLQQRLAQEISTMEHRKDQLLAERTLLRARLEKVEQRLQEARETWDSPGNCGLKTELEELEGQSQRSPEAQNDKGEASQEEQHHLETSEELPRTGTLC.

Positions 71–196 form a coiled coil; the sequence is SEELGEAQAL…LQEARETWDS (126 aa). The disordered stretch occupies residues 189 to 247; that stretch reads EARETWDSPGNCGLKTELEELEGQSQRSPEAQNDKGEASQEEQHHLETSEELPRTGTLC. The span at 220 to 241 shows a compositional bias: basic and acidic residues; it reads QNDKGEASQEEQHHLETSEELP.

Belongs to the SYCE family. Isoform 1 is abundantly expressed in testis and weakly in ovary, it is not found in other tissues. Isoform 2 is expressed in testis and poorly in brain, heart, lung and other examined tissues.

In terms of biological role, may be involved in meiosis. Isoform 1 may be involved in meiosis during spermatogenesis while isoform 2 is probably related to a later stage of meiosis, in the development stage of secondary spermatocytes and spermatids. The chain is Synaptonemal complex central element protein 1-like (Syce1l) from Mus musculus (Mouse).